A 142-amino-acid polypeptide reads, in one-letter code: Pleckstrin homology-like domain family A member 2 (142 aa).

Residue Ser-3 is modified to Phosphoserine. A PH domain is found at 7–99 (VLREGELEKR…WNASITLALI (93 aa)).

The protein belongs to the PHLDA2 family.

It localises to the cytoplasm. The protein localises to the membrane. Plays a role in regulating placenta growth. May act via its PH domain that competes with other PH domain-containing proteins, thereby preventing their binding to membrane lipids. This Bos taurus (Bovine) protein is Pleckstrin homology-like domain family A member 2 (PHLDA2).